A 164-amino-acid polypeptide reads, in one-letter code: Peptide deformylase (164 aa).

Fe cation is bound by residues Cys-87 and His-129. Residue Glu-130 is part of the active site. His-133 contacts Fe cation.

The protein belongs to the polypeptide deformylase family. It depends on Fe(2+) as a cofactor.

It carries out the reaction N-terminal N-formyl-L-methionyl-[peptide] + H2O = N-terminal L-methionyl-[peptide] + formate. Its function is as follows. Removes the formyl group from the N-terminal Met of newly synthesized proteins. Requires at least a dipeptide for an efficient rate of reaction. N-terminal L-methionine is a prerequisite for activity but the enzyme has broad specificity at other positions. The chain is Peptide deformylase from Thermotoga maritima (strain ATCC 43589 / DSM 3109 / JCM 10099 / NBRC 100826 / MSB8).